A 124-amino-acid chain; its full sequence is uncharacterized protein (124 aa).

A signal peptide spans 1 to 23 (MHKLLKLLSITLIGLSVATGVQA).

Belongs to the cytochrome b562 family.

This is an uncharacterized protein from Pasteurella multocida (strain Pm70).